The following is an 829-amino-acid chain: MVPAWLWLLCFSVPQALVEVSPTTLHVEVPENYGGNFPLYLTKLPWPHKEAGGRVVLSGDSGVAAEGPFSVEAESGFLLVTRALDREEQAEYQIQVTLEAEDGHVLWGPQSVTVHVKDENDQVPQFSQALYSARLSQGTRPGVPFLFLEASDGDEPGTANSDLRFHILSQTPAQPSPDVFRLEPRLGALALSPEGSAGFDHALEGPYQLLVQVKDMGDQASGHQATATVEISIVESTWTPLEPVHLAENLKVPYPHHLAQVHWSGGDVHYRLESQPPGPFDVDTEGKLYVTGELDREAQEQYVLQVQAQNSRGEDYAEPLELHVVVTDENDHAPVCPPRGPPVSVPELSPPGTAVTTLSAEDADAPGSPNSHVVYRLLSPEPQEGPEGGAFQLDPTSGSVSLGAAPLEAGQNMLLQVLAVDLAGAEAGLSSTCEVAVTVTDVNDHAPEFTSSQVGPVSLPEDTEPGTLVATLTATDADLEPAFRLMDFTIEAGDGEGTFGLDWEPDSGHVQLYLLKNLSYEAAPSHTVVVVVRNVVETVGPGPGPGATATVTVLVEKVMPPPRLEQKSYEADIPVNAPAGSFLLTIQPAEPWNGALRFSLVNDSEGWFCIQKVSGEVHTARPLQGARPGDSYTVLVEAQDADAPRLSTSAALVIHFLRAPPAPALPLAPMPSRHLCTPRQDHGVLIPAPSEDPDMATGHGPYSFALGPNPTVQRDWRLQPLNDSHAFLTLALHWVEPREHIVPVVVSQDARVWQLPVRVVVCRCNTEGECMRKVGRMKGMPTKLSAVGILVGTLAAIGFFLILIFTHLALARKKDLDAPADNVPLKAAA.

The first 18 residues, 1 to 18 (MVPAWLWLLCFSVPQALV), serve as a signal peptide directing secretion. Over 19 to 786 (EVSPTTLHVE…MKGMPTKLSA (768 aa)) the chain is Extracellular. Cadherin domains follow at residues 25-126 (LHVE…VPQF), 131-235 (YSAR…SIVE), 242-336 (EPVH…APVC), 341-449 (PPVS…APEF), 455-564 (GPVS…PPRL), and 569-665 (YEAD…APAL). 3 N-linked (GlcNAc...) asparagine glycosylation sites follow: Asn-517, Asn-602, and Asn-722. The tract at residues 666 to 786 (PLAPMPSRHL…MKGMPTKLSA (121 aa)) is ectodomain G. A helical membrane pass occupies residues 787–807 (VGILVGTLAAIGFFLILIFTH). At 808-829 (LALARKKDLDAPADNVPLKAAA) the chain is on the cytoplasmic side.

In terms of tissue distribution, kidney specific. Limited to the basolateral membranes of renal tubular epithelial cells.

Its subcellular location is the cell membrane. Cadherins are calcium-dependent cell adhesion proteins. They preferentially interact with themselves in a homophilic manner in connecting cells; cadherins may thus contribute to the sorting of heterogeneous cell types. This Oryctolagus cuniculus (Rabbit) protein is Cadherin-16 (CDH16).